A 715-amino-acid chain; its full sequence is ATP-dependent DNA helicase Hel308 (715 aa).

The Q motif motif lies at 1–29 (MKVGELNVSEKIKEILRERGIEELYPPQA). ATP is bound by residues Q28 and 46-53 (IPTASGKT). A Helicase ATP-binding domain is found at 33–197 (TSGVLEGENL…WLNAKLIRSD (165 aa)). The short motif at 145–148 (DEIH) is the DEAH box element. A Helicase C-terminal domain is found at 226 to 422 (WEELVYDAVK…ILRSQILALI (197 aa)).

Belongs to the helicase family. Hel308 subfamily. In terms of assembly, monomer.

The catalysed reaction is Couples ATP hydrolysis with the unwinding of duplex DNA by translocating in the 3'-5' direction.. It catalyses the reaction ATP + H2O = ADP + phosphate + H(+). DNA-dependent ATPase and 3'-5' DNA helicase that may be involved in repair of stalled replication forks. In terms of biological role, rapidly unwinds double-stranded (ds)DNA with a 3'-overhang, has no strand reannealing capabilities. Binds single-stranded (ss)DNA, dsDNA with a 3'-overhang and ssRNA. This Pyrococcus abyssi (strain GE5 / Orsay) protein is ATP-dependent DNA helicase Hel308.